Here is a 396-residue protein sequence, read N- to C-terminus: DNA polymerase interacting tetratricopeptide repeat-containing, protein of 47 kDa (396 aa).

TPR repeat units lie at residues alanine 91–asparagine 124, alanine 129–tyrosine 162, and threonine 163–asparagine 196.

It belongs to the TTC4 family. In terms of assembly, forms a complex with Hsp83 and Hsp70aa. Interacts with DNApol-alpha180; the interaction inhibits the activity of the DNA polymerase and occurs only in proliferating cells but not in quiescent cells. As to expression, more abundant in young embryos, pupae and females and a lower level expression seen in late embryos, larvae and males.

It is found in the nucleus. It localises to the nucleoplasm. The protein localises to the cytoplasm. Functionally, may act as a co-chaperone for HSP83. This chain is DNA polymerase interacting tetratricopeptide repeat-containing, protein of 47 kDa (Dpit47), found in Drosophila melanogaster (Fruit fly).